A 477-amino-acid polypeptide reads, in one-letter code: Glycogen synthase (477 aa).

Lys-15 is an ADP-alpha-D-glucose binding site.

Belongs to the glycosyltransferase 1 family. Bacterial/plant glycogen synthase subfamily.

The enzyme catalyses [(1-&gt;4)-alpha-D-glucosyl](n) + ADP-alpha-D-glucose = [(1-&gt;4)-alpha-D-glucosyl](n+1) + ADP + H(+). It participates in glycan biosynthesis; glycogen biosynthesis. In terms of biological role, synthesizes alpha-1,4-glucan chains using ADP-glucose. The chain is Glycogen synthase from Escherichia fergusonii (strain ATCC 35469 / DSM 13698 / CCUG 18766 / IAM 14443 / JCM 21226 / LMG 7866 / NBRC 102419 / NCTC 12128 / CDC 0568-73).